Here is a 130-residue protein sequence, read N- to C-terminus: Nascent polypeptide-associated complex protein (130 aa).

Residues Gly-6–Ile-74 enclose the NAC-A/B domain. The segment at Pro-65–Ile-91 is disordered. Positions Pro-78 to Ala-90 are enriched in acidic residues.

Belongs to the NAC-alpha family. As to quaternary structure, homodimer. Interacts with the ribosome. Binds ribosomal RNA.

In terms of biological role, contacts the emerging nascent chain on the ribosome. The sequence is that of Nascent polypeptide-associated complex protein from Halobacterium salinarum (strain ATCC 700922 / JCM 11081 / NRC-1) (Halobacterium halobium).